The chain runs to 755 residues: Xaa-Pro dipeptidyl-peptidase (755 aa).

Catalysis depends on charge relay system residues serine 348, aspartate 468, and histidine 498.

It belongs to the peptidase S15 family. In terms of assembly, homodimer.

It is found in the cytoplasm. The catalysed reaction is Hydrolyzes Xaa-Pro-|- bonds to release unblocked, N-terminal dipeptides from substrates including Ala-Pro-|-p-nitroanilide and (sequentially) Tyr-Pro-|-Phe-Pro-|-Gly-Pro-|-Ile.. In terms of biological role, removes N-terminal dipeptides sequentially from polypeptides having unsubstituted N-termini provided that the penultimate residue is proline. The protein is Xaa-Pro dipeptidyl-peptidase of Streptococcus thermophilus (strain CNRZ 1066).